Reading from the N-terminus, the 553-residue chain is CDP-diacylglycerol--glycerol-3-phosphate 3-phosphatidyltransferase, mitochondrial (553 aa).

A mitochondrion-targeting transit peptide spans Met1–Ala25. Ser46 is modified (phosphoserine). Position 121–128 (Ala121–Gly128) interacts with ATP. 2 PLD phosphodiesterase domains span residues Thr212 to Tyr238 and Thr457 to Ser490. Residues His217, Lys219, and Asp224 contribute to the active site.

The protein belongs to the CDP-alcohol phosphatidyltransferase class-II family.

It is found in the mitochondrion. The enzyme catalyses a CDP-1,2-diacyl-sn-glycerol + sn-glycerol 3-phosphate = a 1,2-diacyl-sn-glycero-3-phospho-(1'-sn-glycero-3'-phosphate) + CMP + H(+). It participates in phospholipid metabolism; phosphatidylglycerol biosynthesis; phosphatidylglycerol from CDP-diacylglycerol: step 1/2. With respect to regulation, activated by calcium and magnesium and inhibited by other bivalent cations. Functions in the biosynthesis of the anionic phospholipids phosphatidylglycerol and cardiolipin. In Cricetulus griseus (Chinese hamster), this protein is CDP-diacylglycerol--glycerol-3-phosphate 3-phosphatidyltransferase, mitochondrial (PGS1).